Here is a 139-residue protein sequence, read N- to C-terminus: Small ribosomal subunit protein uS11 (139 aa).

A compositionally biased stretch (low complexity) spans 1-13 (MAKQAAKGSAAAT). A disordered region spans residues 1-30 (MAKQAAKGSAAATKRQRGKRREKKNVPRGQ). Residues 14-23 (KRQRGKRREK) are compositionally biased toward basic residues.

The protein belongs to the universal ribosomal protein uS11 family. Part of the 30S ribosomal subunit. Interacts with proteins S7 and S18. Binds to IF-3.

In terms of biological role, located on the platform of the 30S subunit, it bridges several disparate RNA helices of the 16S rRNA. Forms part of the Shine-Dalgarno cleft in the 70S ribosome. The sequence is that of Small ribosomal subunit protein uS11 from Roseiflexus sp. (strain RS-1).